The sequence spans 61 residues: Large ribosomal subunit protein uL30 (61 aa).

This sequence belongs to the universal ribosomal protein uL30 family. Part of the 50S ribosomal subunit.

The polypeptide is Large ribosomal subunit protein uL30 (Bifidobacterium longum (strain DJO10A)).